The primary structure comprises 393 residues: MNIPAPRKDLMIVNMGPHHPSMHGVLRLIVTLDGEDVIDCEPILGYLHRGMEKIAENRTIIQYLPYVTRWDYLATMFTEAITINGPELLGNIQVPKRASYIRAIMLELSRIASHLLWLGPFLADIGAQTPFFYIFRERELVYDLFEAATGMRMMHNFFRIGGVAADLPHGWIDKCLDFCDYFLIGVTEYQKLITRNPIFLERVEGVGVIGREEVINWGLSGPMLRASGIQWDLRKVDHYECYDEFDWEVQWQKEGDSLARYLVRIGEMTESIKIIQQALEGIPGGPYENLEIRYFDRERNPEWNDFDYRFISKKPSPTFELPKQELYVRVEAPKGELGIFLIGDQSGFPWRWKIRPPGFINLQILPQLVKRMKLADIMTILGSIDIIMGEVDR.

Belongs to the complex I 49 kDa subunit family. NDH is composed of at least 16 different subunits, 5 of which are encoded in the nucleus.

The protein resides in the plastid. Its subcellular location is the chloroplast thylakoid membrane. The catalysed reaction is a plastoquinone + NADH + (n+1) H(+)(in) = a plastoquinol + NAD(+) + n H(+)(out). It catalyses the reaction a plastoquinone + NADPH + (n+1) H(+)(in) = a plastoquinol + NADP(+) + n H(+)(out). Its function is as follows. NDH shuttles electrons from NAD(P)H:plastoquinone, via FMN and iron-sulfur (Fe-S) centers, to quinones in the photosynthetic chain and possibly in a chloroplast respiratory chain. The immediate electron acceptor for the enzyme in this species is believed to be plastoquinone. Couples the redox reaction to proton translocation, and thus conserves the redox energy in a proton gradient. In Morus indica (Mulberry), this protein is NAD(P)H-quinone oxidoreductase subunit H, chloroplastic.